A 758-amino-acid chain; its full sequence is Actin filament-associated protein 1-like 1 (758 aa).

The interval 91–194 (YRDSSENLSC…YESYDEEDEE (104 aa)) is disordered. Residues 102 to 120 (LPPPPSAPPPPLPTTPPPE) are compositionally biased toward pro residues. Residues 137–148 (YITSRNSSSPPN) show a composition bias toward polar residues. Residues 177–186 (ESDGLSSSYE) are compositionally biased toward low complexity. One can recognise a PH 1 domain in the interval 216-312 (DSRICAFLLR…WLRVIKEVIS (97 aa)). The interval 335 to 369 (SHDKTSDSDSAANGENSSLSSGKENRDTGKCRKGG) is disordered. A compositionally biased stretch (polar residues) spans 342-356 (SDSAANGENSSLSSG). Residues 409–503 (EVPCCGYLSV…WLGLLLAQTG (95 aa)) enclose the PH 2 domain. Residues 602 to 690 (KTRAEEDARK…TEVKENLKKS (89 aa)) adopt a coiled-coil conformation. A disordered region spans residues 692–758 (AGGPTLGLAV…KAKEWEKKKP (67 aa)). A compositionally biased stretch (basic and acidic residues) spans 749 to 758 (KAKEWEKKKP).

The protein resides in the cytoplasm. The protein localises to the cell projection. Its subcellular location is the podosome. It is found in the invadopodium. It localises to the cytoskeleton. The protein resides in the stress fiber. In terms of biological role, may be involved in podosome and invadosome formation. This chain is Actin filament-associated protein 1-like 1 (afap1l1), found in Xenopus tropicalis (Western clawed frog).